The chain runs to 87 residues: Tektin-2 (87 aa).

The stretch at 26-55 (VEEELLKEVEVIEATKKALQQRVSQAFQQL) forms a coiled coil.

Belongs to the tektin family. Microtubule inner protein component of sperm flagellar doublet microtubules. May interact with CCDC172. In terms of processing, tyrosine phosphorylated. Post-translationally, ubiquitinated, leading to its degradation. Deubiquitinated by USP16, promoting its stability. As to expression, detected in sperm flagella (at protein level).

Its subcellular location is the cytoplasm. It localises to the cytoskeleton. The protein localises to the cilium axoneme. It is found in the flagellum axoneme. The protein resides in the microtubule organizing center. Microtubule inner protein (MIP) part of the dynein-decorated doublet microtubules (DMTs) in cilia and flagellar axoneme. Plays a key role in the assembly or attachment of the inner dynein arm to microtubules in sperm flagella and tracheal cilia. Forms filamentous polymers in the walls of ciliary and flagellar microtubules. The sequence is that of Tektin-2 from Mesocricetus auratus (Golden hamster).